We begin with the raw amino-acid sequence, 247 residues long: tRNA (guanine-N(7)-)-methyltransferase (247 aa).

S-adenosyl-L-methionine contacts are provided by residues glycine 70, 93–94 (EI), 128–129 (NA), and leucine 148. Aspartate 151 is a catalytic residue. S-adenosyl-L-methionine is bound at residue 226–228 (SEE).

The protein belongs to the class I-like SAM-binding methyltransferase superfamily. TrmB family.

Its subcellular location is the nucleus. The catalysed reaction is guanosine(46) in tRNA + S-adenosyl-L-methionine = N(7)-methylguanosine(46) in tRNA + S-adenosyl-L-homocysteine. It participates in tRNA modification; N(7)-methylguanine-tRNA biosynthesis. Its function is as follows. Catalyzes the formation of N(7)-methylguanine at position 46 (m7G46) in tRNA. This is tRNA (guanine-N(7)-)-methyltransferase from Drosophila persimilis (Fruit fly).